Here is a 958-residue protein sequence, read N- to C-terminus: Coiled-coil domain-containing protein 187 (958 aa).

Positions 116 to 132 (SSVSSGRMSGSSGGHES) are enriched in low complexity. 4 disordered regions span residues 116-160 (SSVS…SDPR), 345-447 (ELTR…PRFF), 470-492 (QDIS…QRPW), and 510-602 (EPSP…KAQA). Polar residues-rich tracts occupy residues 374–398 (LQST…NSSL) and 470–491 (QDIS…SQRP). Residues 536–545 (SSPSSKGKSA) are compositionally biased toward low complexity. Residues 718-743 (KQARLQALETMAEALRQRVDILTTKL) adopt a coiled-coil conformation. Residues 916-958 (EVKKEGLVTPWTTRSCGKGEPADRPWAGWSGGQGGLPWASSTA) form a disordered region.

The chain is Coiled-coil domain-containing protein 187 from Mus musculus (Mouse).